We begin with the raw amino-acid sequence, 456 residues long: E3 ubiquitin-protein ligase RNF25 (456 aa).

The region spanning 18 to 127 (SEVEVLESIY…EKGKEILTDN (110 aa)) is the RWD domain. Zn(2+)-binding residues include Cys-134, Cys-137, Cys-152, His-154, His-157, Cys-160, Cys-195, and Cys-198. An RING-type zinc finger spans residues 134-199 (CVICLYGFQE…AVGVQCPVCR (66 aa)). Residues 269-456 (LEPESAVDVS…PLGLESEEGS (188 aa)) form a disordered region. Polar residues predominate over residues 288–332 (SAEQSTSLADQSTLPTSLPMTTQYTYEKTSGAGPNQQRPGETQKS). Basic and acidic residues-rich tracts occupy residues 364–388 (SEIH…EPRN) and 410–421 (RTRDCARWERSK).

Belongs to the RNF25 family. In terms of assembly, interacts with UBE2D2, and may also interact with UBE2E1 and UBE2E3. Interacts with RELA/p65. In terms of processing, ubiquitinated; autoubiquitinated. As to expression, ubiquitous.

The protein localises to the cytoplasm. The catalysed reaction is S-ubiquitinyl-[E2 ubiquitin-conjugating enzyme]-L-cysteine + [acceptor protein]-L-lysine = [E2 ubiquitin-conjugating enzyme]-L-cysteine + N(6)-ubiquitinyl-[acceptor protein]-L-lysine.. It functions in the pathway protein modification; protein ubiquitination. E3 ubiquitin-protein ligase that plays a key role in the RNF14-RNF25 translation quality control pathway, a pathway that takes place when a ribosome has stalled during translation, and which promotes ubiquitination and degradation of translation factors on stalled ribosomes. Catalyzes ubiquitination of RPS27A in response to ribosome collisions, promoting activation of RNF14. RNF25 catalyzes ubiquitination of other ribosomal proteins on stalled ribosomes, such as RPL0, RPL1, RPL12, RPS13 and RPS17. Also involved in ubiquitination and degradation of stalled ETF1/eRF1. Independently of its function in the response to stalled ribosomes, mediates ubiquitination and subsequent proteasomal degradation of NKD2. May also stimulate transcription mediated by NF-kappa-B via its interaction with RELA/p65. The protein is E3 ubiquitin-protein ligase RNF25 of Mus musculus (Mouse).